The chain runs to 490 residues: 2-succinylbenzoate--CoA ligase (490 aa).

It belongs to the ATP-dependent AMP-binding enzyme family. MenE subfamily.

It carries out the reaction 2-succinylbenzoate + ATP + CoA = 2-succinylbenzoyl-CoA + AMP + diphosphate. It functions in the pathway quinol/quinone metabolism; 1,4-dihydroxy-2-naphthoate biosynthesis; 1,4-dihydroxy-2-naphthoate from chorismate: step 5/7. The protein operates within quinol/quinone metabolism; menaquinone biosynthesis. Functionally, converts 2-succinylbenzoate (OSB) to 2-succinylbenzoyl-CoA (OSB-CoA). This Geobacillus kaustophilus (strain HTA426) protein is 2-succinylbenzoate--CoA ligase.